The chain runs to 789 residues: MRFTLSWLMQYLDTDASLDFIISKLSDIGLEVDSVDCKKHLQSFVVVEVIDVVPHHAADKLKVCQVYDGVQTFQVVCGASNVKVGMKSVLAYVGSVIPKNQTVIKVAKLRGVDSYGMLCSRDELGIAENDSTDEGIIELSDNTYNVGESFFSCDPVIELNITPNRGDCLGVYGIARDLAAAGVGKLKSVNFCDITFDNTCYISPIEICLEVQGIVKGVYIKGIRNCETPKWLKEYLFSCGVKSISCVVDIINYIMLSFNRPLHIYDADKIAGKLVFRKIDDQIEFFALNDKKYLLGKENIIAVDLANRIHSIVGVIGSEYSKCLFDTENIFLECAWFDPVDIALSSRKIKLSTDSSYRLERFVDPEFLQDGLKLATKMILEYCGGSPSSIVSVQNYVHNDILLNFSPDSVRNIGSVSITRDEIFDFLCNIGCVVKNHDCDIWIVIPPSWRSDLKHSFDLVEEVLRLYGYDKILENPIPISNIEFPDNLHNKLRSVLLSQGMTEVVTWSFTNLEFAKKFGYDSDIMLIDNPINNNMNLMRPSVLLNLLQVISENQAYGNNDAAIFEIGQIYNINSVCGDNNYVVSGVRYGDNLPRNFYKTDRSVDIFDVKSDFFKVLQEMNIGYDSVDLVRSTKSYLHPMKSADVYFNNILIGYFGELHPSIVHLYEIKRPIVCFEVFLYKIPVVDLTRKEFVELRYQSVKRDFAFLVSKNVNIQCLIEVAKKTNVQLIEDVSIFDIYEGNGIDKGMLSVALSVTFRSVDHTLNDQEIKDASDLIISAISKGFNGILRSC.

The tRNA-binding domain maps to 38-151 (KKHLQSFVVV…NTYNVGESFF (114 aa)). The B5 domain occupies 398–474 (HNDILLNFSP…RLYGYDKILE (77 aa)). Residues Asp452, Asp458, Glu461, and Glu462 each contribute to the Mg(2+) site. Positions 694-787 (LRYQSVKRDF…ISKGFNGILR (94 aa)) constitute an FDX-ACB domain.

This sequence belongs to the phenylalanyl-tRNA synthetase beta subunit family. Type 1 subfamily. In terms of assembly, tetramer of two alpha and two beta subunits. It depends on Mg(2+) as a cofactor.

The protein localises to the cytoplasm. The enzyme catalyses tRNA(Phe) + L-phenylalanine + ATP = L-phenylalanyl-tRNA(Phe) + AMP + diphosphate + H(+). This chain is Phenylalanine--tRNA ligase beta subunit, found in Ehrlichia ruminantium (strain Welgevonden).